Here is an 81-residue protein sequence, read N- to C-terminus: Cytochrome b559 subunit alpha (81 aa).

The helical transmembrane segment at V21–W35 threads the bilayer. H23 provides a ligand contact to heme.

It belongs to the PsbE/PsbF family. In terms of assembly, heterodimer of an alpha subunit and a beta subunit. PSII is composed of 1 copy each of membrane proteins PsbA, PsbB, PsbC, PsbD, PsbE, PsbF, PsbH, PsbI, PsbJ, PsbK, PsbL, PsbM, PsbT, PsbX, PsbY, PsbZ, Psb30/Ycf12, peripheral proteins PsbO, CyanoQ (PsbQ), PsbU, PsbV and a large number of cofactors. It forms dimeric complexes. It depends on heme b as a cofactor.

It is found in the cellular thylakoid membrane. This b-type cytochrome is tightly associated with the reaction center of photosystem II (PSII). PSII is a light-driven water:plastoquinone oxidoreductase that uses light energy to abstract electrons from H(2)O, generating O(2) and a proton gradient subsequently used for ATP formation. It consists of a core antenna complex that captures photons, and an electron transfer chain that converts photonic excitation into a charge separation. The polypeptide is Cytochrome b559 subunit alpha (Rippkaea orientalis (strain PCC 8801 / RF-1) (Cyanothece sp. (strain PCC 8801))).